Reading from the N-terminus, the 241-residue chain is uncharacterized protein (241 aa).

The next 5 helical transmembrane spans lie at L7–F27, L37–I57, I72–G92, I110–F130, and F138–I158.

The protein localises to the cell membrane. This is an uncharacterized protein from Methanocaldococcus jannaschii (strain ATCC 43067 / DSM 2661 / JAL-1 / JCM 10045 / NBRC 100440) (Methanococcus jannaschii).